The following is a 249-amino-acid chain: Probable transcriptional regulatory protein CYB_1350 (249 aa).

It belongs to the TACO1 family.

It is found in the cytoplasm. This is Probable transcriptional regulatory protein CYB_1350 from Synechococcus sp. (strain JA-2-3B'a(2-13)) (Cyanobacteria bacterium Yellowstone B-Prime).